Consider the following 167-residue polypeptide: Phospholipase A2 imperatoxin-1 (167 aa).

The Ca(2+) site is built by Trp-38, Gly-40, and Gly-42. Disulfide bonds link Cys-39–Cys-61, Cys-60–Cys-99, Cys-67–Cys-92, Cys-90–Cys-127, and Cys-132–Cys-144. The active site involves His-64. Asp-65 is a binding site for Ca(2+). A glycan (N-linked (GlcNAc...) asparagine) is linked at Asn-102. Residues 136-140 constitute a propeptide that is removed on maturation; sequence RRLAR.

The protein belongs to the phospholipase A2 family. Group III subfamily. As to quaternary structure, heterodimer composed of a large subunit and a small subunit; disulfide-linked. It depends on Ca(2+) as a cofactor. As to expression, expressed by the venom gland.

The protein localises to the secreted. The catalysed reaction is a 1,2-diacyl-sn-glycero-3-phosphocholine + H2O = a 1-acyl-sn-glycero-3-phosphocholine + a fatty acid + H(+). In terms of biological role, phospholipase toxin, which may catalyze the calcium-dependent hydrolysis of the 2-acyl groups in 3-sn-phosphoglycerides. Inhibits both skeletal (RYR1) and cardiac (RYR2) ryanodine receptors (calcium release channels). Probably blocks ryanodine receptors by generating a lipid product. The sequence is that of Phospholipase A2 imperatoxin-1 from Pandinus imperator (Emperor scorpion).